An 874-amino-acid chain; its full sequence is Leucine--tRNA ligase (874 aa).

Residues 47-57 (PYPSGKLHMGH) carry the 'HIGH' region motif. Positions 636-640 (KMSKS) match the 'KMSKS' region motif. Lysine 639 provides a ligand contact to ATP.

This sequence belongs to the class-I aminoacyl-tRNA synthetase family.

It is found in the cytoplasm. It carries out the reaction tRNA(Leu) + L-leucine + ATP = L-leucyl-tRNA(Leu) + AMP + diphosphate. This Acinetobacter baumannii (strain AB0057) protein is Leucine--tRNA ligase.